The following is a 217-amino-acid chain: Putative thymidylate synthase (217 aa).

The active site involves Cys-139.

This sequence belongs to the thymidylate synthase family. Archaeal-type ThyA subfamily. As to quaternary structure, monomer.

It is found in the cytoplasm. Its pathway is pyrimidine metabolism; dTTP biosynthesis. Its function is as follows. May catalyze the biosynthesis of dTMP using an unknown cosubstrate. The chain is Putative thymidylate synthase from Methanosarcina acetivorans (strain ATCC 35395 / DSM 2834 / JCM 12185 / C2A).